The following is a 152-amino-acid chain: Cytosolic calcium-binding protein 1 (152 aa).

7 tandem repeats follow at residues 57 to 62 (VEETEK), 67 to 71 (TEEAQ), 78 to 82 (VEIKK), 104 to 108 (VEAKK), 112 to 116 (VEEKK), 124 to 129 (VEEEKK), and 131 to 136 (EAEEEK). Residues 57–136 (VEETEKPIEE…EKKPEAEEEK (80 aa)) are 7 X 5 AA approximate repeats of V-E-E-K-K. The tract at residues 60–152 (TEKPIEETEE…VTAPVEKADE (93 aa)) is disordered. The span at 96-138 (DESKTEEVVEAKKEEEVEEKKTEEAPVVVEEEKKPEAEEEKPA) shows a compositional bias: basic and acidic residues.

Predominantly expressed in petioles (at protein level). Mainly observed in shoots, flowers, siliques and roots, and, to a lower extent, in stems and leaves.

It localises to the cytoplasm. Its subcellular location is the cytosol. Its function is as follows. Binds calcium Ca(2+) and may act as a signal mediator to buffer Ca(2+). This is Cytosolic calcium-binding protein 1 from Arabidopsis thaliana (Mouse-ear cress).